The sequence spans 297 residues: Formylmethanofuran--tetrahydromethanopterin formyltransferase (297 aa).

This sequence belongs to the FTR family. In terms of assembly, homotetramer.

The protein resides in the cytoplasm. It carries out the reaction N-formylmethanofuran + 5,6,7,8-tetrahydromethanopterin + H(+) = N(5)-formyl-5,6,7,8-tetrahydromethanopterin + methanofuran. Its pathway is one-carbon metabolism; methanogenesis from CO(2); 5,10-methenyl-5,6,7,8-tetrahydromethanopterin from CO(2): step 2/3. Its function is as follows. Catalyzes the reversible transfer of a formyl group from formylmethanofuran (formyl-MFR) to tetrahydromethanopterin (H(4)MPT) to produce 5-formyl tetrahydromethanopterin (5-formyl-H(4)MPT) and methanofuran (MFR). In Methanothermus fervidus (strain ATCC 43054 / DSM 2088 / JCM 10308 / V24 S), this protein is Formylmethanofuran--tetrahydromethanopterin formyltransferase.